The sequence spans 330 residues: Aspartate--ammonia ligase (330 aa).

Belongs to the class-II aminoacyl-tRNA synthetase family. AsnA subfamily.

Its subcellular location is the cytoplasm. The enzyme catalyses L-aspartate + NH4(+) + ATP = L-asparagine + AMP + diphosphate + H(+). The protein operates within amino-acid biosynthesis; L-asparagine biosynthesis; L-asparagine from L-aspartate (ammonia route): step 1/1. This Streptococcus pyogenes serotype M3 (strain ATCC BAA-595 / MGAS315) protein is Aspartate--ammonia ligase.